We begin with the raw amino-acid sequence, 198 residues long: Dermorphin-2 (198 aa).

Residues 1–20 (MSFLKKSLLLILFLGLVSLS) form the signal peptide. A propeptide spanning residues 21–45 (VCKEEKRVSEEENENEENHEEGSEM) is cleaved from the precursor. The segment at 24–198 (EEKRVSEEEN…AFGYPSGEAK (175 aa)) is disordered. The residue at position 49 (Ala49) is a D-alanine (Ala). A Serine amide modification is found at Ser54. Over residues 56 to 65 (EAKKIKRESE) the composition is skewed to basic and acidic residues. A propeptide spanning residues 56–80 (EAKKIKRESEEEKEIEENHEEGSEM) is cleaved from the precursor. A D-alanine (Ala) modification is found at Ala84. At Ser89 the chain carries Serine amide. The propeptide occupies 91–115 (EAKKIKRESEEENENEENHEEGSEM). Residues 100 to 109 (EEENENEENH) show a composition bias toward acidic residues. Ala119 is modified (D-alanine (Ala)). Ser124 carries the post-translational modification Serine amide. Basic and acidic residues predominate over residues 126 to 135 (EAKKIKRESE). A propeptide spanning residues 126–150 (EAKKIKRESEEEKEIEENHEEGSEM) is cleaved from the precursor. The residue at position 154 (Ala154) is a D-alanine (Ala). Serine amide is present on Ser159. A propeptide spanning residues 161-185 (EAKKIKRESEEENENEENHEEGSEM) is cleaved from the precursor. A compositionally biased stretch (acidic residues) spans 170 to 179 (EEENENEENH). Ala189 bears the D-alanine (Ala) mark. Serine amide is present on Ser194. A propeptide spanning residues 196–198 (EAK) is cleaved from the precursor.

Belongs to the frog skin active peptide (FSAP) family. Dermorphin subfamily. As to expression, expressed by the skin glands.

The protein resides in the secreted. Functionally, dermorphin has a very potent opiate-like activity. It has high affinity and selectivity for mu-type opioid receptors. The sequence is that of Dermorphin-2 from Phyllomedusa sauvagei (Sauvage's leaf frog).